Reading from the N-terminus, the 456-residue chain is High mobility group B protein 6 (456 aa).

Disordered stretches follow at residues 1–42 (MATN…KSAK), 117–142 (SSLT…KRPS), 238–258 (AEQD…PKHP), and 349–389 (MLKK…YFLF). Residues 11–21 (KKPRNSRKALK) are compositionally biased toward basic residues. The HMG box 1 DNA-binding region spans 138–206 (TKRPSSSYVL…AYLQVIAKEK (69 aa)). A compositionally biased stretch (basic and acidic residues) spans 240–254 (QDNKKKNKKEKDPLK). The segment at residues 255-321 (PKHPVSAFLV…TYLQAMEEYK (67 aa)) is a DNA-binding region (HMG box 2). Over residues 354–363 (EKTDNLIKKE) the composition is skewed to basic and acidic residues. A DNA-binding region (HMG box 3) is located at residues 379–447 (PKKPASSYFL…AYKKEVEAYN (69 aa)).

It is found in the nucleus. The polypeptide is High mobility group B protein 6 (HMGB6) (Arabidopsis thaliana (Mouse-ear cress)).